The sequence spans 349 residues: uncharacterized protein (349 aa).

A signal peptide spans 1–25 (MNKYIKQGAPILGILLAVMFGGREG).

Belongs to the bacterial solute-binding protein 1 family. WtpA subfamily.

This is an uncharacterized protein from Methanococcus aeolicus (strain ATCC BAA-1280 / DSM 17508 / OCM 812 / Nankai-3).